A 289-amino-acid polypeptide reads, in one-letter code: UPF0173 metal-dependent hydrolase H16_A2129 (289 aa).

This sequence belongs to the UPF0173 family.

This chain is UPF0173 metal-dependent hydrolase H16_A2129, found in Cupriavidus necator (strain ATCC 17699 / DSM 428 / KCTC 22496 / NCIMB 10442 / H16 / Stanier 337) (Ralstonia eutropha).